Here is a 311-residue protein sequence, read N- to C-terminus: Syndecan-1 (311 aa).

The first 22 residues, 1–22 (MRRAALWLWLCALALRLQPALP), serve as a signal peptide directing secretion. Residues 23-255 (QIVAVNVPPE…SLLDRKEVLG (233 aa)) are Extracellular-facing. Disordered regions lie at residues 29-59 (VPPEDQDGSGDDSDNFSGSGTGALPDTLSRQ) and 152-184 (SHPHGGMQPGLHETSAPTAPGQPDHQPPRVEGG). Residues 32–42 (EDQDGSGDDSD) show a composition bias toward acidic residues. An O-linked (Xyl...) (chondroitin sulfate) serine glycan is attached at Ser37. Asn43 carries an N-linked (GlcNAc...) asparagine glycan. 2 O-linked (Xyl...) (heparan sulfate) serine glycosylation sites follow: Ser45 and Ser47. 2 O-linked (Xyl...) (chondroitin sulfate) serine glycosylation sites follow: Ser207 and Ser217. Residues 256–276 (GVIAGGLVGLIFAVCLVAFML) form a helical membrane-spanning segment. The Cytoplasmic portion of the chain corresponds to 277-311 (YRMKKKDEGSYSLEEPKQANGGAYQKPTKQEEFYA). Residues 285–311 (GSYSLEEPKQANGGAYQKPTKQEEFYA) form a disordered region. Residue Ser286 is modified to Phosphoserine.

Belongs to the syndecan proteoglycan family. Interacts with CDCP1. Interacts (via C-terminus) with TIAM1 (via PDZ domain). Interacts with MDK. Shedding is enhanced by a number of factors such as heparanase, thrombin or EGF. Also by stress and wound healing. PMA-mediated shedding is inhibited by TIMP3.

Its subcellular location is the membrane. It is found in the secreted. The protein resides in the extracellular exosome. Functionally, cell surface proteoglycan that contains both heparan sulfate and chondroitin sulfate and that links the cytoskeleton to the interstitial matrix. Regulates exosome biogenesis in concert with SDCBP and PDCD6IP. Able to induce its own expression in dental mesenchymal cells and also in the neighboring dental epithelial cells via an MSX1-mediated pathway. This Mus musculus (Mouse) protein is Syndecan-1.